The following is a 336-amino-acid chain: Type II methyltransferase M.PvuII (336 aa).

2 repeat units span residues 11–113 (SNDM…IYNF) and 181–293 (SDRM…WISF). Positions 196-215 (TPKTRPSGHDIGKSFSKDNG) are disordered. A compositionally biased stretch (basic and acidic residues) spans 202 to 211 (SGHDIGKSFS).

This sequence belongs to the N(4)/N(6)-methyltransferase family. N(4) subfamily. Monomer.

It carries out the reaction a 2'-deoxycytidine in DNA + S-adenosyl-L-methionine = an N(4)-methyl-2'-deoxycytidine in DNA + S-adenosyl-L-homocysteine + H(+). Functionally, a beta subtype methylase, recognizes the double-stranded sequence 5'-CAGCTG-3', methylates C-4 on both strands, and protects the DNA from cleavage by the PvuII endonuclease. This Proteus hauseri protein is Type II methyltransferase M.PvuII.